The primary structure comprises 202 residues: Na(+)-translocating NADH-quinone reductase subunit E (202 aa).

Transmembrane regions (helical) follow at residues 11–31 (AVFVENMALAFFLGMCTFIAI), 35–55 (VETAIGLGIAVIVVQTITVPA), 81–101 (FLGLLSYIGVIAAIVQILEML), 114–134 (GVFLPLITVNCAIMAGSLFMV), 144–164 (TVYGVGSGFSWALAIAALAGI), and 180–200 (LGITFITIGLMSLGFMSFSGV).

The protein belongs to the NqrDE/RnfAE family. In terms of assembly, composed of six subunits; NqrA, NqrB, NqrC, NqrD, NqrE and NqrF.

The protein resides in the cell inner membrane. The enzyme catalyses a ubiquinone + n Na(+)(in) + NADH + H(+) = a ubiquinol + n Na(+)(out) + NAD(+). In terms of biological role, NQR complex catalyzes the reduction of ubiquinone-1 to ubiquinol by two successive reactions, coupled with the transport of Na(+) ions from the cytoplasm to the periplasm. NqrA to NqrE are probably involved in the second step, the conversion of ubisemiquinone to ubiquinol. This chain is Na(+)-translocating NADH-quinone reductase subunit E, found in Pseudomonas aeruginosa (strain LESB58).